The sequence spans 427 residues: Trigger factor (427 aa).

Residues 163–248 (GDTVVIDFVG…IHEVKTKEVP (86 aa)) enclose the PPIase FKBP-type domain.

Belongs to the FKBP-type PPIase family. Tig subfamily.

It localises to the cytoplasm. The enzyme catalyses [protein]-peptidylproline (omega=180) = [protein]-peptidylproline (omega=0). Involved in protein export. Acts as a chaperone by maintaining the newly synthesized protein in an open conformation. Functions as a peptidyl-prolyl cis-trans isomerase. This chain is Trigger factor, found in Streptococcus agalactiae serotype V (strain ATCC BAA-611 / 2603 V/R).